Reading from the N-terminus, the 604-residue chain is Aspartate--tRNA(Asp/Asn) ligase (604 aa).

E174 lines the L-aspartate pocket. The aspartate stretch occupies residues 198–201 (QLYK). R220 is a binding site for L-aspartate. ATP contacts are provided by residues 220–222 (RDE) and Q229. An L-aspartate-binding site is contributed by H460. ATP is bound at residue E494. R501 contributes to the L-aspartate binding site. 546-549 (GLDR) contributes to the ATP binding site.

Belongs to the class-II aminoacyl-tRNA synthetase family. Type 1 subfamily. As to quaternary structure, homodimer.

Its subcellular location is the cytoplasm. It carries out the reaction tRNA(Asx) + L-aspartate + ATP = L-aspartyl-tRNA(Asx) + AMP + diphosphate. Its function is as follows. Aspartyl-tRNA synthetase with relaxed tRNA specificity since it is able to aspartylate not only its cognate tRNA(Asp) but also tRNA(Asn). Reaction proceeds in two steps: L-aspartate is first activated by ATP to form Asp-AMP and then transferred to the acceptor end of tRNA(Asp/Asn). The protein is Aspartate--tRNA(Asp/Asn) ligase of Paracidovorax citrulli (strain AAC00-1) (Acidovorax citrulli).